Consider the following 60-residue polypeptide: Large ribosomal subunit protein bL32 (60 aa).

A disordered region spans residues 1 to 60 (MAVQQNKKSPSKRGMHRSHDALTNPPLAIEPTTGETHLRHHISPNGFYRGKKVIKTKNDD). The segment covering 49 to 60 (RGKKVIKTKNDD) has biased composition (basic residues).

The protein belongs to the bacterial ribosomal protein bL32 family.

The chain is Large ribosomal subunit protein bL32 from Nitrosomonas eutropha (strain DSM 101675 / C91 / Nm57).